Here is a 318-residue protein sequence, read N- to C-terminus: Taste receptor type 2 member 60 (318 aa).

The Extracellular segment spans residues 1 to 7; sequence MNGDHMV. The helical transmembrane segment at 8-28 threads the bilayer; the sequence is LGSSVTDQKAIILVIILLLLC. The Cytoplasmic segment spans residues 29 to 40; that stretch reads LVAIAGNGFITA. The chain crosses the membrane as a helical span at residues 41 to 61; sequence ALGVEWVLRGTLLPCDKLLVS. Residues 62–88 lie on the Extracellular side of the membrane; the sequence is LRASRFCLQWVVMGKTIYVLLYPTAFP. A helical transmembrane segment spans residues 89 to 109; sequence YNPVLQFLAFQWDFLNAATLW. Topologically, residues 110–128 are cytoplasmic; sequence FSSWLSVFYCVKIATFTHP. Residues 129-149 traverse the membrane as a helical segment; that stretch reads VFLWLKHKLSEWVPWMFFSSV. Residues 150 to 183 are Extracellular-facing; that stretch reads GLSSFTTILFFIGNHSIYQNYLRNHLQPWNVTGN. N-linked (GlcNAc...) asparagine glycosylation is found at Asn-163 and Asn-179. The chain crosses the membrane as a helical span at residues 184–204; sequence SIWSYCEKFYLFPVKMITWTM. Topologically, residues 205 to 234 are cytoplasmic; the sequence is PTAVFFICMILLITSLGRHMEKALLTTSGF. The helical transmembrane segment at 235 to 255 threads the bilayer; the sequence is REPSVQAHVKALLALLSLAML. The Extracellular segment spans residues 256–264; it reads FISYFLSLV. Residues 265–285 form a helical membrane-spanning segment; the sequence is LSAAGIFPPLDFKFWVGESVI. Topologically, residues 286–318 are cytoplasmic; the sequence is YLCAGVHPIILLFSNRRLRAVLERCRSSRCRTP.

Belongs to the G-protein coupled receptor T2R family.

It localises to the membrane. In terms of biological role, receptor that may play a role in the perception of bitterness and is gustducin-linked. May play a role in sensing the chemical composition of the gastrointestinal content. The activity of this receptor may stimulate alpha gustducin, mediate PLC-beta-2 activation and lead to the gating of TRPM5. The sequence is that of Taste receptor type 2 member 60 (TAS2R60) from Macaca mulatta (Rhesus macaque).